The chain runs to 184 residues: Alpha-tubulin N-acetyltransferase (184 aa).

Positions 1-174 (MDTHGEKMKN…NNFVIFAEYF (174 aa)) constitute an N-acetyltransferase domain. Acetyl-CoA-binding positions include 108-121 (FYIRRDFRKRGLGL) and 144-153 (SHKLRSFLKK).

This sequence belongs to the acetyltransferase ATAT1 family.

It catalyses the reaction L-lysyl-[alpha-tubulin] + acetyl-CoA = N(6)-acetyl-L-lysyl-[alpha-tubulin] + CoA + H(+). In terms of biological role, specifically acetylates 'Lys-40' in alpha-tubulin on the lumenal side of microtubules. Promotes microtubule destabilization and accelerates microtubule dynamics; this activity may be independent of acetylation activity. Acetylates alpha-tubulin with a slow enzymatic rate, due to a catalytic site that is not optimized for acetyl transfer. Enters the microtubule through each end and diffuses quickly throughout the lumen of microtubules. Acetylates only long/old microtubules because of its slow acetylation rate since it does not have time to act on dynamically unstable microtubules before the enzyme is released. This Plasmodium vivax (strain Salvador I) protein is Alpha-tubulin N-acetyltransferase.